A 76-amino-acid chain; its full sequence is Kappa-actitoxin-Avd4a (76 aa).

Positions 1–19 (MNKALFLCLVVLCAAVVFA) are cleaved as a signal peptide. Positions 20 to 31 (AEDLQKAKHAPF) are excised as a propeptide. 3 disulfide bridges follow: Cys-37-Cys-72, Cys-39-Cys-65, and Cys-55-Cys-73.

Belongs to the sea anemone type 3 (BDS) potassium channel toxin family. As to expression, highly expressed in the ectodermal tissue from the distal and proximal tentacles, body wall, and oral disk.

It localises to the secreted. It is found in the nematocyst. In terms of biological role, acts as a gating modifier on both Kv and Nav ion channels, and also acts on blood pressure. Voltage-dependently inhibits voltage-gated potassium channels Kv3 (Kv3.1/KCNC1, Kv3.2/KCNC2 and Kv3.4/KCNC4) and slows inactivation of the voltage-gated sodium channel Nav1.7/SCN9A. Inhibits all Kv3.1, Kv3.2 and Kv3.4 by about 50% when tested at a voltage of +40 mV (45%, 48% and 56%, respectively). May act by binding residues in voltage-sensing domains S3b and S4 of Kv3. On sodium channels, tests have been done on human Nav1.7/SCN9A (expressed in HEK293 cells) (EC(50)=3 nM) and rat SCG neurons that mostly carry Nav1.7 channels (EC(50)=300 nM). This toxin also reduces blood pressure. The sequence is that of Kappa-actitoxin-Avd4a from Anemonia viridis (Snakelocks anemone).